The following is an 81-amino-acid chain: uncharacterized protein (81 aa).

This is an uncharacterized protein from Dictyostelium discoideum (Social amoeba).